An 82-amino-acid polypeptide reads, in one-letter code: Myosin light chain alkali (82 aa).

The region spanning 7–42 (GCYEDFIECLKLYDKEENGTMMLAELQHALLALGES) is the EF-hand domain.

In terms of assembly, myosin is a hexamer of 2 heavy chains and 4 light chains.

The polypeptide is Myosin light chain alkali (Mlc1) (Drosophila mauritiana (Fruit fly)).